The sequence spans 208 residues: Large ribosomal subunit protein uL4 (208 aa).

The segment at 45–84 (RQGTHKVKNRSEVRGGGKKPYRQKGTGHARQGSSRSGLMS) is disordered. Basic residues predominate over residues 60 to 71 (GGKKPYRQKGTG).

This sequence belongs to the universal ribosomal protein uL4 family. As to quaternary structure, part of the 50S ribosomal subunit.

Functionally, one of the primary rRNA binding proteins, this protein initially binds near the 5'-end of the 23S rRNA. It is important during the early stages of 50S assembly. It makes multiple contacts with different domains of the 23S rRNA in the assembled 50S subunit and ribosome. Forms part of the polypeptide exit tunnel. This chain is Large ribosomal subunit protein uL4, found in Prosthecochloris aestuarii (strain DSM 271 / SK 413).